Reading from the N-terminus, the 422-residue chain is Immunoglobulin mu Fc receptor (422 aa).

The signal sequence occupies residues 1 to 16; that stretch reads MDFWLWLLYFLPVSGA. Topologically, residues 18–262 are extracellular; that stretch reads RVLPEVQLNV…DRGLHIPIPE (245 aa). An Ig-like domain is found at 24–121; it reads QLNVEWGGSI…GKTQKITLNV (98 aa). 2 disulfide bridges follow: Cys-37–Cys-103 and Cys-49–Cys-58. Phosphothreonine is present on Thr-91. Residues 263-283 form a helical membrane-spanning segment; sequence FHILIPTFLGFLLLVLLGLVV. The Cytoplasmic segment spans residues 284–422; that stretch reads KRAIQRRRAS…YAPGPRSSCP (139 aa). Basic residues predominate over residues 290–308; the sequence is RRASSRRAGRLAMRRRGRG. Disordered stretches follow at residues 290–367 and 391–422; these read RRAS…QVLE and VNLE…SSCP. Over residues 344–363 the composition is skewed to low complexity; the sequence is LGPAEAPLLNAPASASPASP.

In terms of assembly, interacts (via Ig-like domain) with IGHM (via CH4/Cmu4 domain), both secreted and membrane-bound IgM; the interaction is glycan-independent and multivalent theoretically involving up to eight binding sites for the IgM pentamer. Post-translationally, phosphorylated on both Tyr and Ser residues. O-glycosylated. Sialylated. O-linked glycans regulate trafficking to the plasma membrane. As to expression, expressed in pre-B cells, immature and mature B cells residing in primary and secondary lymphoid organs (at protein level). In the spleen, highly expressed in follicular and marginal zone B cells and at lower levels in germinal center B cells and plasma cells. Expressed in splenic dendritic cells and in granulocytes. In the peritoneum, expressed in B1-a and B-2 cell lineages. In the bone marrow, expressed in immature B cells and at a lower level in pro- and pre-B cells (at protein level). Expressed in M cells (at protein level).

Its subcellular location is the cell membrane. The protein resides in the early endosome membrane. It is found in the golgi apparatus. The protein localises to the trans-Golgi network membrane. It localises to the lysosome membrane. Its function is as follows. High-affinity Fc receptor for immunoglobulin M (IgM), both secreted and membrane-bound IgM. Primarily regulates IgM transport and homeostasis. In lymphoid cells, enables exocytosis of membrane-bound IgM on the plasma membrane as well as endocytosis of IgM-antigen complexes toward lysosomes for degradation. In mucosal epithelium, mediates retrotranscytosis of antigen-IgM complexes across mucosal M cells toward antigen-presenting cells in mucosal lymphoid tissues. Triggers costimulatory signaling and mediates most of IgM effector functions involved in B cell development and primary immune response to infection. Likely limits tonic IgM BCR signaling to self-antigens for proper negative selection of autoreactive B cells in the bone marrow and for the maintenance of regulatory B cell pool in peripheral lymphoid organs. Mediates antibody responses to T cell-dependent and T cell-independent antigens and promotes induction of an efficient neutralizing IgG response. Engages in cross-talk with antigen-receptor signaling via the non-canonical NF-kappa-B, MAP kinases and calcium signaling pathways. The sequence is that of Immunoglobulin mu Fc receptor from Mus musculus (Mouse).